Reading from the N-terminus, the 423-residue chain is MSYVIDRRLNGKNKSTVNRQRFLRRYRDHIKKAVEEAVSRRSITDMEHGEQISIPGRDIDEPVLHHGRGGKQTVVHPGNKEFTTGEHIARPQGGAGGKGPGKAGNSGEGMDEFSFQITQEEFLEFMFEDLELPNLVKRNLTGTDTFKTVRAGISNEGNPSRINIIRTLRSAHARRIALSGSSRAKLREATSELERIKREEPDNFGDIQALEVEIDRLKARIRRVPYLDTFDLKYNLLVKQPNPSSKAVMFCLMDVSGSMTQATKDIAKRFFILLYLFLKRNYDKIDVVFIRHHTSAREVDEEEFFYSRETGGTIVSSALKLMQEIMAARYPSSDWNIYAAQASDGDNWNDDSPICREILTKQIMPFVQYYTYVEITPREHQALWYEYERIGDDFADTFAQQQLVSAGDIYPVFRELFQRRLVS.

Residues 65 to 110 (HHGRGGKQTVVHPGNKEFTTGEHIARPQGGAGGKGPGKAGNSGEGM) are disordered. Positions 93–107 (GGAGGKGPGKAGNSG) are enriched in gly residues.

It belongs to the UPF0229 family.

The sequence is that of UPF0229 protein PSPTO_0546 from Pseudomonas syringae pv. tomato (strain ATCC BAA-871 / DC3000).